Consider the following 135-residue polypeptide: ATP synthase epsilon chain (135 aa).

It belongs to the ATPase epsilon chain family. In terms of assembly, F-type ATPases have 2 components, CF(1) - the catalytic core - and CF(0) - the membrane proton channel. CF(1) has five subunits: alpha(3), beta(3), gamma(1), delta(1), epsilon(1). CF(0) has three main subunits: a, b and c.

The protein resides in the cell inner membrane. Produces ATP from ADP in the presence of a proton gradient across the membrane. This chain is ATP synthase epsilon chain, found in Brucella suis (strain ATCC 23445 / NCTC 10510).